The chain runs to 454 residues: Transmembrane protein adipocyte-associated 1 homolog (454 aa).

N-linked (GlcNAc...) asparagine glycosylation is found at Asn-26 and Asn-44. 5 helical membrane passes run 80–100 (AILI…TSVI), 113–133 (AFTL…VYSM), 151–171 (IIIK…GLLF), 180–200 (ILIA…VQVI), and 224–244 (FVFW…IMCL). The N-linked (GlcNAc...) asparagine glycan is linked to Asn-258. Helical transmembrane passes span 262-282 (FIYC…AALI) and 290-310 (LCFV…IIYF). N-linked (GlcNAc...) asparagine glycans are attached at residues Asn-322 and Asn-323. Residues 408–454 (RTGSDDFAHHRDSMLSEPSTGTTTRHLKGLGPQGSLVFEEDPSSLRL) are disordered. Over residues 410–421 (GSDDFAHHRDSM) the composition is skewed to basic and acidic residues. The span at 445 to 454 (FEEDPSSLRL) shows a compositional bias: acidic residues.

This sequence belongs to the UPF0359 family.

The protein resides in the membrane. This Caenorhabditis briggsae protein is Transmembrane protein adipocyte-associated 1 homolog (tpra-1).